Consider the following 150-residue polypeptide: Holo-[acyl-carrier-protein] synthase (150 aa).

2 residues coordinate Mg(2+): aspartate 8 and glutamate 57.

Belongs to the P-Pant transferase superfamily. AcpS family. Mg(2+) is required as a cofactor.

It is found in the cytoplasm. It catalyses the reaction apo-[ACP] + CoA = holo-[ACP] + adenosine 3',5'-bisphosphate + H(+). Its function is as follows. Transfers the 4'-phosphopantetheine moiety from coenzyme A to a Ser of acyl-carrier-protein. This Jannaschia sp. (strain CCS1) protein is Holo-[acyl-carrier-protein] synthase.